We begin with the raw amino-acid sequence, 44 residues long: Thymosin beta (44 aa).

The interval 1 to 44 (MSDKHDKPDISEVTKFDKSKLKKTETHEKNPLPTKETIDQEKQG) is disordered. N-acetylserine is present on S2.

In terms of tissue distribution, expressed in regenerating axons.

It is found in the cytoplasm. The protein localises to the cytoskeleton. Its function is as follows. Plays an important role in the organization of the cytoskeleton. Binds to and sequesters actin monomers (G actin) and therefore inhibits actin polymerization. May be involved in the regulation of structural plasticity in the CNS. The sequence is that of Thymosin beta from Aplysia californica (California sea hare).